The following is a 474-amino-acid chain: MKTMKRVKTVTARSSDFGKWYTDVCLKAELIAYSEAKGFIIYLPYGYALWENIQKHLNCTLQKTGHQNVYFPLVFPEKLFHKEKNHIQGFSPEAAMITTTGKKNLSEKLVIRPTSEILFSQYYSKTITSYRDLPKLYNQWCNVVRWEKTTKPFLRGKEFLWQEGHTVHATEQEAMQQTLSILDIYQKLGKNLLALPFVCGKKTETEKFAGALITYSIEALMHDGQALQAGTSHYLGTNFAKSFQIQFQDCDHQKKYVHQTSWGVSTRLIGALIMVHSDDEGLVLPPYVSPMQIVIIPLQPQDDAVKQTSENLFSILQKNYRVHLDLQDKTAGWKFSQYELKGVPLRIEIGKRGLENDEVTIFQRYNFAKQNIKTKDLPSQIPQLFETIHNNMYQKALQHLEQNRKQATTYEEFKTYLKQGGYVAMSISGTDAELQIKQETGATARVILETNLITANCPVTNKKALQTVLFARAY.

This sequence belongs to the class-II aminoacyl-tRNA synthetase family. ProS type 3 subfamily. In terms of assembly, homodimer.

Its subcellular location is the cytoplasm. It catalyses the reaction tRNA(Pro) + L-proline + ATP = L-prolyl-tRNA(Pro) + AMP + diphosphate. Its function is as follows. Catalyzes the attachment of proline to tRNA(Pro) in a two-step reaction: proline is first activated by ATP to form Pro-AMP and then transferred to the acceptor end of tRNA(Pro). This chain is Proline--tRNA ligase, found in Onion yellows phytoplasma (strain OY-M).